Reading from the N-terminus, the 102-residue chain is Noncompact myelin-associated protein (102 aa).

Over Met1–Gly30 the chain is Extracellular. Residues Ala31–Leu51 traverse the membrane as a helical segment. Topologically, residues Lys52 to Arg102 are cytoplasmic. Positions Thr60–Arg102 are disordered. Positions Gly78 to Phe92 are enriched in polar residues.

Glycosylated.

It is found in the cell membrane. In terms of biological role, plays a role in myelin formation. The chain is Noncompact myelin-associated protein (NCMAP) from Homo sapiens (Human).